A 203-amino-acid chain; its full sequence is Glycerol-3-phosphate acyltransferase (203 aa).

The next 4 helical transmembrane spans lie at 6–26 (LTLL…AVLV), 82–102 (AISL…PIFF), 118–138 (APIG…LVLI), and 141–161 (YSSL…WWLD).

The protein belongs to the PlsY family. As to quaternary structure, probably interacts with PlsX.

Its subcellular location is the cell inner membrane. The enzyme catalyses an acyl phosphate + sn-glycerol 3-phosphate = a 1-acyl-sn-glycero-3-phosphate + phosphate. It functions in the pathway lipid metabolism; phospholipid metabolism. Catalyzes the transfer of an acyl group from acyl-phosphate (acyl-PO(4)) to glycerol-3-phosphate (G3P) to form lysophosphatidic acid (LPA). This enzyme utilizes acyl-phosphate as fatty acyl donor, but not acyl-CoA or acyl-ACP. The chain is Glycerol-3-phosphate acyltransferase from Shewanella sp. (strain MR-7).